A 78-amino-acid polypeptide reads, in one-letter code: Antimicrobial peptide marcin-18 (78 aa).

The first 23 residues, 1–23, serve as a signal peptide directing secretion; it reads MQFKKQLMVIFLAYFLVVNESEA. Arginine 41 carries the arginine amide modification. A propeptide spanning residues 42-78 is cleaved from the precursor; that stretch reads RKNQRSRSIMKRDLENLFDPYQRNLELDRLLKQLPNY.

It belongs to the non-disulfide-bridged peptide (NDBP) superfamily. Medium-length antimicrobial peptide (group 3) family. Expressed by the venom gland.

It is found in the secreted. Its subcellular location is the target cell membrane. Its function is as follows. Antimicrobial peptide with potent activity against bacteria. Acts by fastly disrupting the bacterial membrane. Shows activity against Gram-positive bacteria S.aureus (MIC=1.5-2.9 uM) and S.epidermidis (MIC=2.9 uM), M.luteus (MIC=23.4 uM), B.thuringiensis (MIC=2.9 uM), B.subtilis (MIC=2.9 uM) and Gram-negative bacteria E.coli (MIC=5.9-11.7 uM) and P.aeruginosa (MIC=5.9 uM), as well as against penicillin (MIC=2.9 uM) and methicillin (MIC=1.5-2.9 uM) resistant bacteria. Antibiotic activity is not affected by major negatively charged components of the prokaryotic cell wall (e.g. lipopolysaccharides and lipoteichoic acid). In vivo, in a mouse model of lethal peritonitis, shows potent antibiotic activity without cytotoxicity, improving the survival rate. The protein is Antimicrobial peptide marcin-18 of Olivierus martensii (Manchurian scorpion).